The following is a 238-amino-acid chain: tRNA (guanine-N(1)-)-methyltransferase (238 aa).

S-adenosyl-L-methionine-binding positions include Gly110 and 129-134 (LGDFIL).

Belongs to the RNA methyltransferase TrmD family. In terms of assembly, homodimer.

Its subcellular location is the cytoplasm. The enzyme catalyses guanosine(37) in tRNA + S-adenosyl-L-methionine = N(1)-methylguanosine(37) in tRNA + S-adenosyl-L-homocysteine + H(+). Functionally, specifically methylates guanosine-37 in various tRNAs. The chain is tRNA (guanine-N(1)-)-methyltransferase from Clostridium botulinum (strain Eklund 17B / Type B).